A 308-amino-acid polypeptide reads, in one-letter code: D-alanine--D-alanine ligase (308 aa).

Residues 108-303 (KLVWKAAGLP…YEALCLKVLE (196 aa)) form the ATP-grasp domain. 134-189 (EAELGLPMFVKPACEGSSLGVTKVRKAGELAQAYAEARKFDPLVLAEQFVGGGEYT) is a binding site for ATP. Residues Asp-257, Glu-270, and Asn-272 each coordinate Mg(2+).

This sequence belongs to the D-alanine--D-alanine ligase family. It depends on Mg(2+) as a cofactor. Requires Mn(2+) as cofactor.

The protein resides in the cytoplasm. The catalysed reaction is 2 D-alanine + ATP = D-alanyl-D-alanine + ADP + phosphate + H(+). The protein operates within cell wall biogenesis; peptidoglycan biosynthesis. Its function is as follows. Cell wall formation. This is D-alanine--D-alanine ligase from Laribacter hongkongensis (strain HLHK9).